The chain runs to 388 residues: Putative N(4)-(beta-N-acetylglucosaminyl)-L-asparaginase GL17147 (388 aa).

The N-terminal stretch at 1-20 (MYKAQYLWLFGLVLISRSAT) is a signal peptide. Cystine bridges form between Cys94-Cys99 and Cys193-Cys209. The active-site Nucleophile is Thr240. Substrate is bound by residues 268-271 (RVGD) and 291-294 (TGDG). Cys351 and Cys378 form a disulfide bridge.

Belongs to the Ntn-hydrolase family. Heterotetramer of two alpha and two beta chains arranged as a dimer of alpha/beta heterodimers. Post-translationally, cleaved into an alpha and beta chain by autocatalysis; this activates the enzyme. The N-terminal residue of the beta subunit is responsible for the nucleophile hydrolase activity.

The catalysed reaction is N(4)-(beta-N-acetyl-D-glucosaminyl)-L-asparagine + H2O = N-acetyl-beta-D-glucosaminylamine + L-aspartate + H(+). Its function is as follows. Cleaves the GlcNAc-Asn bond which joins oligosaccharides to the peptide of asparagine-linked glycoproteins. The sequence is that of Putative N(4)-(beta-N-acetylglucosaminyl)-L-asparaginase GL17147 from Drosophila persimilis (Fruit fly).